Consider the following 366-residue polypeptide: Pyruvate dehydrogenase E1 component subunit beta, mitochondrial (366 aa).

The transit peptide at 1 to 33 directs the protein to the mitochondrion; that stretch reads MFSRLPTSLARNVARRAPTSFVRPSAAAAALRF. E95 is a thiamine diphosphate binding site. The K(+) site is built by A196, I197, D199, and N201.

Pyruvate dehydrogenase (E1) is a tetramer of 2 alpha and 2 beta subunits. Eukaryotic pyruvate dehydrogenase (PDH) complexes are organized as a core consisting of the oligomeric dihydrolipoamide acetyl-transferase (E2), around which are arranged multiple copies of pyruvate dehydrogenase (E1), dihydrolipoamide dehydrogenase (E3) and protein X (E3BP) bound by non-covalent bonds. Thiamine diphosphate serves as cofactor.

The protein resides in the mitochondrion matrix. The enzyme catalyses N(6)-[(R)-lipoyl]-L-lysyl-[protein] + pyruvate + H(+) = N(6)-[(R)-S(8)-acetyldihydrolipoyl]-L-lysyl-[protein] + CO2. In terms of biological role, the pyruvate dehydrogenase complex catalyzes the overall conversion of pyruvate to acetyl-CoA and CO(2). This Saccharomyces cerevisiae (strain ATCC 204508 / S288c) (Baker's yeast) protein is Pyruvate dehydrogenase E1 component subunit beta, mitochondrial (PDB1).